A 105-amino-acid polypeptide reads, in one-letter code: Ketoisovalerate oxidoreductase subunit VorD (105 aa).

2 4Fe-4S ferredoxin-type domains span residues 44-73 and 74-103; these read FMPV…IKED and GFVA…MVRE. Positions 53, 56, 59, 63, 83, 86, 89, and 93 each coordinate [4Fe-4S] cluster.

As to quaternary structure, heterotetramer of one alpha, one beta, one delta and one gamma chain. [4Fe-4S] cluster is required as a cofactor.

The enzyme catalyses 3-methyl-2-oxobutanoate + 2 oxidized [2Fe-2S]-[ferredoxin] + CoA = 2-methylpropanoyl-CoA + 2 reduced [2Fe-2S]-[ferredoxin] + CO2 + H(+). In Pyrococcus abyssi (strain GE5 / Orsay), this protein is Ketoisovalerate oxidoreductase subunit VorD (vorD).